We begin with the raw amino-acid sequence, 964 residues long: Glycine dehydrogenase (decarboxylating) (964 aa).

Lysine 710 carries the post-translational modification N6-(pyridoxal phosphate)lysine.

The protein belongs to the GcvP family. In terms of assembly, the glycine cleavage system is composed of four proteins: P, T, L and H. It depends on pyridoxal 5'-phosphate as a cofactor.

It catalyses the reaction N(6)-[(R)-lipoyl]-L-lysyl-[glycine-cleavage complex H protein] + glycine + H(+) = N(6)-[(R)-S(8)-aminomethyldihydrolipoyl]-L-lysyl-[glycine-cleavage complex H protein] + CO2. In terms of biological role, the glycine cleavage system catalyzes the degradation of glycine. The P protein binds the alpha-amino group of glycine through its pyridoxal phosphate cofactor; CO(2) is released and the remaining methylamine moiety is then transferred to the lipoamide cofactor of the H protein. This is Glycine dehydrogenase (decarboxylating) from Saccharophagus degradans (strain 2-40 / ATCC 43961 / DSM 17024).